Here is a 671-residue protein sequence, read N- to C-terminus: DNA ligase (671 aa).

Residues aspartate 32 to aspartate 36, serine 81 to leucine 82, and glutamate 113 each bind NAD(+). The active-site N6-AMP-lysine intermediate is the lysine 115. NAD(+) contacts are provided by arginine 136, glutamate 173, lysine 290, and lysine 314. 4 residues coordinate Zn(2+): cysteine 408, cysteine 411, cysteine 426, and cysteine 432. The BRCT domain maps to glutamate 593–alanine 671.

This sequence belongs to the NAD-dependent DNA ligase family. LigA subfamily. The cofactor is Mg(2+). Mn(2+) is required as a cofactor.

It catalyses the reaction NAD(+) + (deoxyribonucleotide)n-3'-hydroxyl + 5'-phospho-(deoxyribonucleotide)m = (deoxyribonucleotide)n+m + AMP + beta-nicotinamide D-nucleotide.. DNA ligase that catalyzes the formation of phosphodiester linkages between 5'-phosphoryl and 3'-hydroxyl groups in double-stranded DNA using NAD as a coenzyme and as the energy source for the reaction. It is essential for DNA replication and repair of damaged DNA. The sequence is that of DNA ligase from Salmonella typhi.